Consider the following 249-residue polypeptide: Adenosylcobinamide-GDP ribazoletransferase (249 aa).

Helical transmembrane passes span 32–52 (MVAFPLAGTLIGGLVAATWFG), 53–73 (ATWLWGTTTGSLCAILTWGAI), 107–127 (IGTMGAIALISILLLKWLFVL), 136–156 (ALIVAPTLGRWVDIIGIFWFP), 190–210 (LLWWWAGLIFAVVIVATIIIA), and 224–244 (TYGALCEIAEMLVLAVVAALV).

The protein belongs to the CobS family. It depends on Mg(2+) as a cofactor.

The protein resides in the cell membrane. It catalyses the reaction alpha-ribazole + adenosylcob(III)inamide-GDP = adenosylcob(III)alamin + GMP + H(+). It carries out the reaction alpha-ribazole 5'-phosphate + adenosylcob(III)inamide-GDP = adenosylcob(III)alamin 5'-phosphate + GMP + H(+). It functions in the pathway cofactor biosynthesis; adenosylcobalamin biosynthesis; adenosylcobalamin from cob(II)yrinate a,c-diamide: step 7/7. In terms of biological role, joins adenosylcobinamide-GDP and alpha-ribazole to generate adenosylcobalamin (Ado-cobalamin). Also synthesizes adenosylcobalamin 5'-phosphate from adenosylcobinamide-GDP and alpha-ribazole 5'-phosphate. In Herpetosiphon aurantiacus (strain ATCC 23779 / DSM 785 / 114-95), this protein is Adenosylcobinamide-GDP ribazoletransferase.